The following is a 375-amino-acid chain: Chaperone protein DnaJ (375 aa).

The 66-residue stretch at 6–71 folds into the J domain; the sequence is DYYEILGVSR…DKRARYDQYG (66 aa). The CR-type zinc-finger motif lies at 132-214; it reads GTTKKITIPR…CQGSGKVRKQ (83 aa). Positions 145, 148, 162, 165, 188, 191, 202, and 205 each coordinate Zn(2+). CXXCXGXG motif repeat units lie at residues 145–152, 162–169, 188–195, and 202–209; these read CDTCNGTG, CPQCNGSG, CDRCGGRG, and CPTCQGSG. The interval 222 to 243 is disordered; that stretch reads PPGVDTGTRLRMPNEGEAGDKG.

Belongs to the DnaJ family. Homodimer. The cofactor is Zn(2+).

Its subcellular location is the cytoplasm. Functionally, participates actively in the response to hyperosmotic and heat shock by preventing the aggregation of stress-denatured proteins and by disaggregating proteins, also in an autonomous, DnaK-independent fashion. Unfolded proteins bind initially to DnaJ; upon interaction with the DnaJ-bound protein, DnaK hydrolyzes its bound ATP, resulting in the formation of a stable complex. GrpE releases ADP from DnaK; ATP binding to DnaK triggers the release of the substrate protein, thus completing the reaction cycle. Several rounds of ATP-dependent interactions between DnaJ, DnaK and GrpE are required for fully efficient folding. Also involved, together with DnaK and GrpE, in the DNA replication of plasmids through activation of initiation proteins. The protein is Chaperone protein DnaJ of Halothermothrix orenii (strain H 168 / OCM 544 / DSM 9562).